The chain runs to 308 residues: MRPLAIVGPTGTGKSDLALAVAGLLSAEIAVEVVNADAMQLYRGMDIGTAKLTVVERHGVPHHQLDVLDVTETATVARYQQAAAADVEAIAARGALPVIVGGSMLYVQSLLDQWSFPATDPRVRTRWERRLAEIGVAALHHELADVDAAAAASILPTDGRRIVRALEVVELTGQPFAASAPTIGAPRWGTVIVGLDWDTTVLDERLARRTDLMFERGLVDEVVGLLGVGLREGVTAARALGYAQVLADLDAGGDGSAAREPTFVGTRRYVRRQRSWFRRDHRITWLDGAAGGSAALADKVIRIWRDVS.

8 to 15 serves as a coordination point for ATP; the sequence is GPTGTGKS. 10–15 lines the substrate pocket; the sequence is TGTGKS.

Belongs to the IPP transferase family. As to quaternary structure, monomer. It depends on Mg(2+) as a cofactor.

The enzyme catalyses adenosine(37) in tRNA + dimethylallyl diphosphate = N(6)-dimethylallyladenosine(37) in tRNA + diphosphate. In terms of biological role, catalyzes the transfer of a dimethylallyl group onto the adenine at position 37 in tRNAs that read codons beginning with uridine, leading to the formation of N6-(dimethylallyl)adenosine (i(6)A). The polypeptide is tRNA dimethylallyltransferase (Mycolicibacterium vanbaalenii (strain DSM 7251 / JCM 13017 / BCRC 16820 / KCTC 9966 / NRRL B-24157 / PYR-1) (Mycobacterium vanbaalenii)).